Here is a 98-residue protein sequence, read N- to C-terminus: Defensin (98 aa).

Positions 1–19 (MRTFLVTFVLVVVVGVISA) are cleaved as a signal peptide. Positions 20–58 (YPSNPVEVEAEDFDAQDPDLQTFQDTFYEVPQVHSRQKR) are excised as a propeptide. 3 disulfides stabilise this stretch: Cys-61-Cys-88, Cys-74-Cys-94, and Cys-78-Cys-96.

In terms of tissue distribution, is synthesized by the fat body and eventually secreted into the hemolymph.

It is found in the secreted. Has antiparasitic activity against promastigote forms of L.major, and antibacterial activity against Gram-positive bacterium S.aureus. Has antifungal activity against the yeasts C.albicans and S.cerevisiae, but not C.glabrata. Has antifungal activity against filamentous fungi A.fumigatus, F.culmorum, F.oxysporum, N.crassa, T.viride and T.mentagrophytes, but not B.bassiana. The protein is Defensin of Phlebotomus duboscqi (Sandfly).